A 158-amino-acid polypeptide reads, in one-letter code: uncharacterized protein (158 aa).

The next 4 membrane-spanning stretches (helical) occupy residues 42 to 62, 71 to 91, 102 to 122, and 130 to 150; these read FHFA…GFLY, WIFI…HLIA, LLTG…QMFL, and ELII…PLLF.

Its subcellular location is the cell membrane. This is an uncharacterized protein from Bacillus subtilis (strain 168).